Here is a 153-residue protein sequence, read N- to C-terminus: NADPH-dependent 7-cyano-7-deazaguanine reductase (153 aa).

A disordered region spans residues 1–26; sequence MVKIHDGASQLGANVAAPRSPEEATL. Residue Cys-51 is the Thioimide intermediate of the active site. Asp-58 (proton donor) is an active-site residue. Substrate is bound by residues 73-75 and 92-93; these read VES and HE.

This sequence belongs to the GTP cyclohydrolase I family. QueF type 1 subfamily.

The protein localises to the cytoplasm. The enzyme catalyses 7-aminomethyl-7-carbaguanine + 2 NADP(+) = 7-cyano-7-deazaguanine + 2 NADPH + 3 H(+). It functions in the pathway tRNA modification; tRNA-queuosine biosynthesis. Functionally, catalyzes the NADPH-dependent reduction of 7-cyano-7-deazaguanine (preQ0) to 7-aminomethyl-7-deazaguanine (preQ1). This chain is NADPH-dependent 7-cyano-7-deazaguanine reductase, found in Methylocella silvestris (strain DSM 15510 / CIP 108128 / LMG 27833 / NCIMB 13906 / BL2).